A 169-amino-acid polypeptide reads, in one-letter code: Ribosome maturation factor RimP (169 aa).

It belongs to the RimP family.

Its subcellular location is the cytoplasm. Its function is as follows. Required for maturation of 30S ribosomal subunits. This Streptomyces avermitilis (strain ATCC 31267 / DSM 46492 / JCM 5070 / NBRC 14893 / NCIMB 12804 / NRRL 8165 / MA-4680) protein is Ribosome maturation factor RimP.